The following is a 332-amino-acid chain: tRNA U34 carboxymethyltransferase (332 aa).

Carboxy-S-adenosyl-L-methionine is bound by residues Lys-91, Trp-105, Lys-110, Gly-130, 152 to 154, 181 to 182, Met-196, Tyr-200, and Arg-315; these read DPS and IE.

It belongs to the class I-like SAM-binding methyltransferase superfamily. CmoB family. Homotetramer.

The catalysed reaction is carboxy-S-adenosyl-L-methionine + 5-hydroxyuridine(34) in tRNA = 5-carboxymethoxyuridine(34) in tRNA + S-adenosyl-L-homocysteine + H(+). Catalyzes carboxymethyl transfer from carboxy-S-adenosyl-L-methionine (Cx-SAM) to 5-hydroxyuridine (ho5U) to form 5-carboxymethoxyuridine (cmo5U) at position 34 in tRNAs. This is tRNA U34 carboxymethyltransferase from Shewanella putrefaciens (strain CN-32 / ATCC BAA-453).